A 476-amino-acid polypeptide reads, in one-letter code: Ribosomal RNA small subunit methyltransferase F (476 aa).

Residues 125–131 (AAAPGSK), Glu149, Asp176, and Asp194 contribute to the S-adenosyl-L-methionine site. Catalysis depends on Cys247, which acts as the Nucleophile.

Belongs to the class I-like SAM-binding methyltransferase superfamily. RsmB/NOP family.

The protein localises to the cytoplasm. The enzyme catalyses cytidine(1407) in 16S rRNA + S-adenosyl-L-methionine = 5-methylcytidine(1407) in 16S rRNA + S-adenosyl-L-homocysteine + H(+). Functionally, specifically methylates the cytosine at position 1407 (m5C1407) of 16S rRNA. This is Ribosomal RNA small subunit methyltransferase F from Aeromonas salmonicida (strain A449).